A 151-amino-acid polypeptide reads, in one-letter code: Large ribosomal subunit protein bL9 (151 aa).

The protein belongs to the bacterial ribosomal protein bL9 family.

Its function is as follows. Binds to the 23S rRNA. In Bordetella avium (strain 197N), this protein is Large ribosomal subunit protein bL9.